The primary structure comprises 104 residues: Chromogranin-A (104 aa).

The cysteines at positions 17 and 38 are disulfide-linked.

It belongs to the chromogranin/secretogranin protein family. In terms of assembly, dimer.

It localises to the cytoplasmic vesicle. The protein localises to the secretory vesicle. It is found in the secreted. Chromogranin A probably has a paracrine role in the regulation of secretion or maturation. This is Chromogranin-A (CHGA) from Struthio camelus (Common ostrich).